Consider the following 213-residue polypeptide: Octanoyltransferase (213 aa).

Positions 35–213 (DERGDAVLLL…ERHLPTLIEP (179 aa)) constitute a BPL/LPL catalytic domain. Residues 73–80 (RGGKITWH), 145–147 (AIG), and 158–160 (GFS) each bind substrate. The Acyl-thioester intermediate role is filled by Cys176.

This sequence belongs to the LipB family.

Its subcellular location is the cytoplasm. It carries out the reaction octanoyl-[ACP] + L-lysyl-[protein] = N(6)-octanoyl-L-lysyl-[protein] + holo-[ACP] + H(+). The protein operates within protein modification; protein lipoylation via endogenous pathway; protein N(6)-(lipoyl)lysine from octanoyl-[acyl-carrier-protein]: step 1/2. In terms of biological role, catalyzes the transfer of endogenously produced octanoic acid from octanoyl-acyl-carrier-protein onto the lipoyl domains of lipoate-dependent enzymes. Lipoyl-ACP can also act as a substrate although octanoyl-ACP is likely to be the physiological substrate. The sequence is that of Octanoyltransferase from Salinispora tropica (strain ATCC BAA-916 / DSM 44818 / JCM 13857 / NBRC 105044 / CNB-440).